A 497-amino-acid chain; its full sequence is Glycerol kinase (497 aa).

Thr-12 provides a ligand contact to ADP. 3 residues coordinate ATP: Thr-12, Thr-13, and Ser-14. Residue Thr-12 participates in sn-glycerol 3-phosphate binding. Arg-16 lines the ADP pocket. Sn-glycerol 3-phosphate is bound by residues Arg-82, Glu-83, Tyr-134, and Asp-243. Residues Arg-82, Glu-83, Tyr-134, Asp-243, and Gln-244 each coordinate glycerol. Residues Thr-265 and Gly-308 each contribute to the ADP site. ATP-binding residues include Thr-265, Gly-308, Gln-312, and Gly-411. An ADP-binding site is contributed by Gly-411.

Belongs to the FGGY kinase family.

The catalysed reaction is glycerol + ATP = sn-glycerol 3-phosphate + ADP + H(+). It functions in the pathway polyol metabolism; glycerol degradation via glycerol kinase pathway; sn-glycerol 3-phosphate from glycerol: step 1/1. Its activity is regulated as follows. Inhibited by fructose 1,6-bisphosphate (FBP). In terms of biological role, key enzyme in the regulation of glycerol uptake and metabolism. Catalyzes the phosphorylation of glycerol to yield sn-glycerol 3-phosphate. In Allorhizobium ampelinum (strain ATCC BAA-846 / DSM 112012 / S4) (Agrobacterium vitis (strain S4)), this protein is Glycerol kinase.